The chain runs to 122 residues: Large ribosomal subunit protein uL14c (122 aa).

The protein belongs to the universal ribosomal protein uL14 family. As to quaternary structure, part of the 50S ribosomal subunit.

Its subcellular location is the plastid. Binds to 23S rRNA. The protein is Large ribosomal subunit protein uL14c (rpl14) of Helicosporidium sp. subsp. Simulium jonesii (Green alga).